The chain runs to 912 residues: WD repeat-containing protein 44 (912 aa).

Disordered stretches follow at residues 206 to 352 (DIIE…ELTD), 399 to 426 (SNDA…LKQK), and 460 to 481 (RDEV…GMPY). Residues 236–258 (NRPPQPINAPPPRPPPPARPAPP) show a composition bias toward pro residues. Positions 264–278 (GDTDFDRSSGFEYQK) are enriched in basic and acidic residues. Over residues 288–311 (SPNTLTENMNRDSQPSLDLASATS) the composition is skewed to polar residues. The span at 410–422 (KPQSHQSETDGGK) shows a compositional bias: basic and acidic residues. The segment covering 469–478 (DDPSSSDDEG) has biased composition (acidic residues). The WD 1 repeat unit spans residues 511–550 (EHVGAVWTMKFSHCGRLLASAGQDNVVRIWVLKNAFDYFN). Residues 559–594 (EGRVSPSPSQESLNSSKSDTDGGVFSGTDDVDPDDK) form a disordered region. Residues 563 to 575 (SPSPSQESLNSSK) show a composition bias toward low complexity. WD repeat units lie at residues 608–646 (GHTA…CLCC), 648–688 (QHID…VALW), 693–732 (GQTK…YHTQ), 743–782 (RVGR…LSMK), 787–826 (VNSS…SKFT), 841–880 (AHNA…ENIP), and 882–912 (GALK…KNIS). The segment at 861 to 882 (AETSSEKQEGDQAEPVENIPSG) is disordered.

The protein resides in the cytoplasm. It is found in the cytosol. The protein localises to the perinuclear region. It localises to the endosome membrane. Its subcellular location is the golgi apparatus. The protein resides in the trans-Golgi network. In terms of biological role, downstream effector for rab11. May be involved in vesicle recycling. May also be involved in the inhibition of the intracellular ciliogenesis pathway. This is WD repeat-containing protein 44 (wdr44) from Xenopus laevis (African clawed frog).